The sequence spans 228 residues: MTQDELKALVAQAAADYVKQEVPEGAVLGVGTGSTANLFIDAVAAFKDRFAGAVSSSEASTRRLQQHGFKVLDLNEVDEIPVYVDGADEIDASGAMVKGGGGALTREKIVASVARRFVCIADGSKLVQTMGAFPLPVEVVPMARAAVARKLQALGGQPRLRMTKEGGIYKTDNGNVILDVAGLKIDDPRGLEQTINQVPGVVTVGLFALRGADVLLLGTGDGVQRTDY.

Substrate-binding positions include Thr32 to Thr35, Asp85 to Asp88, and Lys98 to Gly101. Catalysis depends on Glu107, which acts as the Proton acceptor. Position 125 (Lys125) interacts with substrate.

It belongs to the ribose 5-phosphate isomerase family. Homodimer.

The enzyme catalyses aldehydo-D-ribose 5-phosphate = D-ribulose 5-phosphate. The protein operates within carbohydrate degradation; pentose phosphate pathway; D-ribose 5-phosphate from D-ribulose 5-phosphate (non-oxidative stage): step 1/1. Catalyzes the reversible conversion of ribose-5-phosphate to ribulose 5-phosphate. In Cupriavidus taiwanensis (strain DSM 17343 / BCRC 17206 / CCUG 44338 / CIP 107171 / LMG 19424 / R1) (Ralstonia taiwanensis (strain LMG 19424)), this protein is Ribose-5-phosphate isomerase A.